We begin with the raw amino-acid sequence, 213 residues long: uncharacterized protein (213 aa).

This is an uncharacterized protein from Acanthamoeba polyphaga mimivirus (APMV).